Reading from the N-terminus, the 139-residue chain is ATP synthase epsilon chain, chloroplastic (139 aa).

The protein belongs to the ATPase epsilon chain family. F-type ATPases have 2 components, CF(1) - the catalytic core - and CF(0) - the membrane proton channel. CF(1) has five subunits: alpha(3), beta(3), gamma(1), delta(1), epsilon(1). CF(0) has three main subunits: a, b and c.

It is found in the plastid. Its subcellular location is the chloroplast thylakoid membrane. In terms of biological role, produces ATP from ADP in the presence of a proton gradient across the membrane. In Dictyota dichotoma, this protein is ATP synthase epsilon chain, chloroplastic.